The sequence spans 310 residues: ADP-L-glycero-D-manno-heptose-6-epimerase (310 aa).

Residues 10 to 11 (FI), 31 to 32 (DN), lysine 38, lysine 53, 75 to 79 (EGACS), and asparagine 92 contribute to the NADP(+) site. The active-site Proton acceptor is tyrosine 140. Lysine 144 serves as a coordination point for NADP(+). Asparagine 169 contributes to the substrate binding site. Residues valine 170 and lysine 178 each coordinate NADP(+). Lysine 178 (proton acceptor) is an active-site residue. Substrate contacts are provided by residues serine 180, histidine 187, 201–204 (FEGS), arginine 209, and tyrosine 272.

This sequence belongs to the NAD(P)-dependent epimerase/dehydratase family. HldD subfamily. As to quaternary structure, homopentamer. It depends on NADP(+) as a cofactor.

The catalysed reaction is ADP-D-glycero-beta-D-manno-heptose = ADP-L-glycero-beta-D-manno-heptose. Its pathway is nucleotide-sugar biosynthesis; ADP-L-glycero-beta-D-manno-heptose biosynthesis; ADP-L-glycero-beta-D-manno-heptose from D-glycero-beta-D-manno-heptose 7-phosphate: step 4/4. Catalyzes the interconversion between ADP-D-glycero-beta-D-manno-heptose and ADP-L-glycero-beta-D-manno-heptose via an epimerization at carbon 6 of the heptose. This Klebsiella pneumoniae subsp. pneumoniae (strain ATCC 700721 / MGH 78578) protein is ADP-L-glycero-D-manno-heptose-6-epimerase.